The following is a 292-amino-acid chain: tRNA pseudouridine synthase B (292 aa).

Residue Asp-38 is the Nucleophile of the active site.

It belongs to the pseudouridine synthase TruB family. Type 1 subfamily.

It catalyses the reaction uridine(55) in tRNA = pseudouridine(55) in tRNA. Functionally, responsible for synthesis of pseudouridine from uracil-55 in the psi GC loop of transfer RNAs. The sequence is that of tRNA pseudouridine synthase B from Streptococcus pneumoniae serotype 4 (strain ATCC BAA-334 / TIGR4).